Here is a 780-residue protein sequence, read N- to C-terminus: Translation initiation factor IF-2 (780 aa).

The disordered stretch occupies residues R44 to E194. Residues T53–T65 are compositionally biased toward basic and acidic residues. The segment covering S66–T81 has biased composition (polar residues). 2 stretches are compositionally biased toward low complexity: residues N82–P93 and A117–G168. Positions E281–K450 constitute a tr-type G domain. The G1 stretch occupies residues G290–T297. GTP is bound at residue G290–T297. Residues G315–H319 are G2. A G3 region spans residues D336–G339. Residues D336–H340 and N390–D393 contribute to the GTP site. The interval N390 to D393 is G4. A G5 region spans residues S426–K428.

It belongs to the TRAFAC class translation factor GTPase superfamily. Classic translation factor GTPase family. IF-2 subfamily.

Its subcellular location is the cytoplasm. Functionally, one of the essential components for the initiation of protein synthesis. Protects formylmethionyl-tRNA from spontaneous hydrolysis and promotes its binding to the 30S ribosomal subunits. Also involved in the hydrolysis of GTP during the formation of the 70S ribosomal complex. This is Translation initiation factor IF-2 from Listeria welshimeri serovar 6b (strain ATCC 35897 / DSM 20650 / CCUG 15529 / CIP 8149 / NCTC 11857 / SLCC 5334 / V8).